Reading from the N-terminus, the 769-residue chain is Integrin beta-2 (769 aa).

A signal peptide spans 1-22 (MLCRCSPLLLLVGLLTLRSALS). Residue Q23 is modified to Pyrrolidone carboxylic acid. The Extracellular segment spans residues 23–700 (QECAKYKVST…ETRECVKGPN (678 aa)). Positions 24 to 74 (ECAKYKVSTCRDCIESGPGCAWCQKLNFSGQGEPDSVRCDTREQLLAKGCV) constitute a PSI domain. Intrachain disulfides connect C25/C43, C33/C447, C36/C62, C46/C73, C191/C198, C246/C286, C386/C400, C420/C445, C449/C467, C459/C470, C472/C481, C483/C514, C497/C512, C506/C517, C519/C534, C536/C559, C541/C557, C549/C562, C564/C573, C575/C598, C582/C596, C590/C601, C603/C612, C615/C618, C622/C662, C628/C647, C631/C643, and C670/C695. 2 N-linked (GlcNAc...) asparagine glycosylation sites follow: N50 and N116. A VWFA domain is found at 124 to 363 (GYPIDLYYLM…ELIKNAYNKL (240 aa)). S136 and S138 together coordinate Mg(2+). S138, D141, D142, and D173 together coordinate Ca(2+). Residues N229, D231, P233, and E234 each coordinate Ca(2+). A Mg(2+)-binding site is contributed by E234. A glycan (N-linked (GlcNAc...) asparagine) is linked at N254. 2 residues coordinate Ca(2+): D264 and E347. Residues 397 to 399 (RGD) carry the Cell attachment site motif. I-EGF domains follow at residues 449–482 (CGDS…KHCE), 483–535 (CQTQ…QFCE), 536–574 (CDNM…SACQ), and 575–613 (CLKS…PLCT). N-linked (GlcNAc...) asparagine glycosylation occurs at N501. A glycan (N-linked (GlcNAc...) asparagine) is linked at N642. Residues 701–723 (IAAIVGGTVGGVVLVGIFLLVIW) form a helical membrane-spanning segment. At 724–769 (KVLTHLSDLREYKRFEKEKLKSQWNNDNPLFKSATTTVMNPKFAER) the chain is on the cytoplasmic side. A phosphoserine mark is found at S745 and S756. Phosphothreonine occurs at positions 758 and 760.

The protein belongs to the integrin beta chain family. As to quaternary structure, heterodimer of an alpha and a beta subunit. The ITGB2 beta subunit associates with the ITGAL, ITGAM, ITGAX or ITGAD alpha subunits. Found in a complex with CD177 and ITGAM/CD11b. Interacts with FGR. Interacts with COPS5 and RANBP9. Interacts with FLNA (via filamin repeats 4, 9, 12, 17, 19, 21, and 23). Interacts with THBD. Both Ser-745 and Ser-756 become phosphorylated when T-cells are exposed to phorbol esters. Phosphorylation on Thr-758 (but not on Ser-756) allows interaction with 14-3-3 proteins.

It localises to the cell membrane. The protein resides in the membrane raft. Functionally, integrin ITGAL/ITGB2 is a receptor for ICAM1, ICAM2, ICAM3 and ICAM4. Integrin ITGAL/ITGB2 is also a receptor for the secreted form of ubiquitin-like protein ISG15; the interaction is mediated by ITGAL. Integrins ITGAM/ITGB2 and ITGAX/ITGB2 are receptors for the iC3b fragment of the third complement component and for fibrinogen. Integrin ITGAX/ITGB2 recognizes the sequence G-P-R in fibrinogen alpha-chain. Integrin ITGAM/ITGB2 recognizes P1 and P2 peptides of fibrinogen gamma chain. Integrin ITGAM/ITGB2 is also a receptor for factor X. Integrin ITGAD/ITGB2 is a receptor for ICAM3 and VCAM1. Contributes to natural killer cell cytotoxicity. Involved in leukocyte adhesion and transmigration of leukocytes including T-cells and neutrophils. Triggers neutrophil transmigration during lung injury through PTK2B/PYK2-mediated activation. Integrin alpha-L/beta-2 in association with ICAM3, contributes to apoptotic neutrophil phagocytosis by macrophages. The sequence is that of Integrin beta-2 (ITGB2) from Sus scrofa (Pig).